The sequence spans 130 residues: Cholecystokinin (130 aa).

An N-terminal signal peptide occupies residues 1 to 20 (MYSGICIYMFLAMLSTSSSG). A propeptide spanning residues 21-60 (QQATGSHNENPVATELEQSLTEHHRHVRVPSSAGQLKPIQ) is cleaved from the precursor. Residue Y112 is modified to Sulfotyrosine. F118 is subject to Phenylalanine amide. Positions 122–130 (SAEEYEYSS) are excised as a propeptide. Residues Y126 and Y128 each carry the sulfotyrosine modification.

Belongs to the gastrin/cholecystokinin family. In terms of processing, the precursor is cleaved by proteases to produce a number of active cholecystokinins. As to expression, expressed in brain, duodenum and small intestine.

It localises to the secreted. This peptide hormone induces gall bladder contraction and the release of pancreatic enzymes in the gut. Its function in the brain is not clear. The sequence is that of Cholecystokinin from Trachemys scripta (Red-eared slider turtle).